The following is a 237-amino-acid chain: UPF0173 metal-dependent hydrolase BruAb2_0628 (237 aa).

The protein belongs to the UPF0173 family.

The protein is UPF0173 metal-dependent hydrolase BruAb2_0628 of Brucella abortus biovar 1 (strain 9-941).